The following is a 551-amino-acid chain: ATPase expression protein 2, mitochondrial (551 aa).

The disordered stretch occupies residues 530 to 551 (AQKAQKRFDDEEEDSMLLGRLW).

Belongs to the AEP2 family. Binds to the 5'UTR of the OLI1 mRNA.

The protein localises to the mitochondrion. Required for translation of the mitochondrial OLI1 transcript coding for the mitochondrial ATP synthase subunit 9. The chain is ATPase expression protein 2, mitochondrial (AEP2) from Lachancea thermotolerans (strain ATCC 56472 / CBS 6340 / NRRL Y-8284) (Yeast).